We begin with the raw amino-acid sequence, 262 residues long: Taurine import ATP-binding protein TauB (262 aa).

The ABC transporter domain maps to 4-233 (LELERISAQY…RYAAGESARA (230 aa)). 38-45 (GPSGSGKT) provides a ligand contact to ATP.

It belongs to the ABC transporter superfamily. Taurine importer (TC 3.A.1.17.1) family. In terms of assembly, the complex is composed of two ATP-binding proteins (TauB), two transmembrane proteins (TauC) and a solute-binding protein (TauA).

The protein resides in the cell inner membrane. It catalyses the reaction taurine(out) + ATP + H2O = taurine(in) + ADP + phosphate + H(+). Its function is as follows. Part of the ABC transporter complex TauABC involved in taurine import. Responsible for energy coupling to the transport system. The protein is Taurine import ATP-binding protein TauB of Pseudomonas putida (strain ATCC 47054 / DSM 6125 / CFBP 8728 / NCIMB 11950 / KT2440).